We begin with the raw amino-acid sequence, 267 residues long: Thymidylate synthase (267 aa).

Arg25 lines the dUMP pocket. (6R)-5,10-methylene-5,6,7,8-tetrahydrofolate is bound at residue His55. Residue 130–131 (RR) participates in dUMP binding. Cys150 acts as the Nucleophile in catalysis. DUMP is bound by residues 170–173 (RSAD), Asn181, and 211–213 (HIY). Position 173 (Asp173) interacts with (6R)-5,10-methylene-5,6,7,8-tetrahydrofolate. Ala266 lines the (6R)-5,10-methylene-5,6,7,8-tetrahydrofolate pocket.

This sequence belongs to the thymidylate synthase family. Bacterial-type ThyA subfamily. As to quaternary structure, homodimer.

The protein resides in the cytoplasm. It catalyses the reaction dUMP + (6R)-5,10-methylene-5,6,7,8-tetrahydrofolate = 7,8-dihydrofolate + dTMP. The protein operates within pyrimidine metabolism; dTTP biosynthesis. Functionally, catalyzes the reductive methylation of 2'-deoxyuridine-5'-monophosphate (dUMP) to 2'-deoxythymidine-5'-monophosphate (dTMP) while utilizing 5,10-methylenetetrahydrofolate (mTHF) as the methyl donor and reductant in the reaction, yielding dihydrofolate (DHF) as a by-product. This enzymatic reaction provides an intracellular de novo source of dTMP, an essential precursor for DNA biosynthesis. The chain is Thymidylate synthase from Corynebacterium efficiens (strain DSM 44549 / YS-314 / AJ 12310 / JCM 11189 / NBRC 100395).